A 644-amino-acid chain; its full sequence is Chaperone protein DnaK (644 aa).

T199 is modified (phosphothreonine; by autocatalysis). The segment covering 550 to 584 (ADKLDESEKQRAQDEIKRGREAMESGDLERMKASR) has biased composition (basic and acidic residues). Disordered regions lie at residues 550-586 (ADKL…SRDS) and 599-644 (YSQA…EDKK). A compositionally biased stretch (low complexity) spans 600 to 623 (SQAGPEQGAPGAEAGAGASQGASG).

Belongs to the heat shock protein 70 family.

Acts as a chaperone. This Leptospira biflexa serovar Patoc (strain Patoc 1 / Ames) protein is Chaperone protein DnaK.